We begin with the raw amino-acid sequence, 66 residues long: Venom peptide CtAPI (66 aa).

5 cysteine pairs are disulfide-bonded: C7–C44, C16–C40, C20–C33, C24–C64, and C46–C58. Positions 7 to 64 constitute a TIL domain; sequence CEKDEEFVNCAPRCPQNCRNIRSYQPCLVLTPVCAPGCVCRSGKVKNDRGDCVSITDC.

Belongs to the serine protease inhibitor-like (TIL domain-containing) family. As to expression, expressed by the venom gland.

The protein resides in the secreted. Its function is as follows. Serine protease inhibitor. This chain is Venom peptide CtAPI, found in Chaerilus tricostatus (Scorpion).